A 635-amino-acid chain; its full sequence is 1-deoxy-D-xylulose-5-phosphate synthase (635 aa).

Thiamine diphosphate-binding positions include histidine 73 and 114-116; that span reads SHA. Aspartate 146 is a Mg(2+) binding site. Residues 147-148, asparagine 176, tyrosine 287, and glutamate 368 contribute to the thiamine diphosphate site; that span reads GA. A Mg(2+)-binding site is contributed by asparagine 176.

Belongs to the transketolase family. DXPS subfamily. In terms of assembly, homodimer. It depends on Mg(2+) as a cofactor. Requires thiamine diphosphate as cofactor.

It carries out the reaction D-glyceraldehyde 3-phosphate + pyruvate + H(+) = 1-deoxy-D-xylulose 5-phosphate + CO2. The protein operates within metabolic intermediate biosynthesis; 1-deoxy-D-xylulose 5-phosphate biosynthesis; 1-deoxy-D-xylulose 5-phosphate from D-glyceraldehyde 3-phosphate and pyruvate: step 1/1. In terms of biological role, catalyzes the acyloin condensation reaction between C atoms 2 and 3 of pyruvate and glyceraldehyde 3-phosphate to yield 1-deoxy-D-xylulose-5-phosphate (DXP). The polypeptide is 1-deoxy-D-xylulose-5-phosphate synthase (Corynebacterium diphtheriae (strain ATCC 700971 / NCTC 13129 / Biotype gravis)).